Consider the following 321-residue polypeptide: Transaldolase (321 aa).

Catalysis depends on Lys-132, which acts as the Schiff-base intermediate with substrate.

The protein belongs to the transaldolase family. Type 1 subfamily. As to quaternary structure, homodimer.

It localises to the cytoplasm. The catalysed reaction is D-sedoheptulose 7-phosphate + D-glyceraldehyde 3-phosphate = D-erythrose 4-phosphate + beta-D-fructose 6-phosphate. The protein operates within carbohydrate degradation; pentose phosphate pathway; D-glyceraldehyde 3-phosphate and beta-D-fructose 6-phosphate from D-ribose 5-phosphate and D-xylulose 5-phosphate (non-oxidative stage): step 2/3. Its function is as follows. Transaldolase is important for the balance of metabolites in the pentose-phosphate pathway. This Marinobacter nauticus (strain ATCC 700491 / DSM 11845 / VT8) (Marinobacter aquaeolei) protein is Transaldolase.